The sequence spans 156 residues: MKGKPAVLAQLHKLLRGELAARDQYFIHSRMYQDWGLEKLYSRIDHEMQDETAHASLLIERILFLEETPDLSQQDPIRVGKTVPEMLQYDLDYEYEVIANLKEAMAVCEQEQDYQSRDLLLKILADTEEDHAYWLEKQLGLIEKIGLQNYLQSQMS.

Positions 1–146 (MKGKPAVLAQ…KQLGLIEKIG (146 aa)) constitute a Ferritin-like diiron domain. The Fe cation site is built by glutamate 18, glutamate 51, histidine 54, glutamate 94, glutamate 128, and histidine 131.

It belongs to the bacterioferritin family. The bacterioferritin (BFR) complex is formed of 24 subunits (BfrA and BfrB) of unknown stoichiometry. The BFR is arranged as 12 dimers that are packed together to form an approximately spherical molecule with a central cavity, in which large amounts of iron can be deposited.

The protein localises to the cytoplasm. The catalysed reaction is 4 Fe(2+) + O2 + 4 H(+) = 4 Fe(3+) + 2 H2O. It carries out the reaction Fe(2+)(in) = Fe(2+)(out). Part of the iron-storage bacterioferritin (BFR) complex which stores about 50% of intracellular iron. Iron-storage protein, whose ferroxidase center binds Fe(2+), oxidizes it using dioxygen to Fe(3+), and participates in the subsequent Fe(3+) oxide mineral core formation within the central cavity of the BFR protein shell. BFR rapidly binds iron in labeling experiments in vivo during iron-limiting conditions. The sequence is that of Bacterial ferritin from Synechocystis sp. (strain ATCC 27184 / PCC 6803 / Kazusa).